Here is a 470-residue protein sequence, read N- to C-terminus: Uronate isomerase (470 aa).

It belongs to the metallo-dependent hydrolases superfamily. Uronate isomerase family.

The enzyme catalyses D-glucuronate = D-fructuronate. It carries out the reaction aldehydo-D-galacturonate = keto-D-tagaturonate. The protein operates within carbohydrate metabolism; pentose and glucuronate interconversion. This chain is Uronate isomerase, found in Salmonella arizonae (strain ATCC BAA-731 / CDC346-86 / RSK2980).